The sequence spans 313 residues: Porphobilinogen deaminase (313 aa).

C243 carries the S-(dipyrrolylmethanemethyl)cysteine modification.

It belongs to the HMBS family. Monomer. Requires dipyrromethane as cofactor.

The enzyme catalyses 4 porphobilinogen + H2O = hydroxymethylbilane + 4 NH4(+). It functions in the pathway porphyrin-containing compound metabolism; protoporphyrin-IX biosynthesis; coproporphyrinogen-III from 5-aminolevulinate: step 2/4. In terms of biological role, tetrapolymerization of the monopyrrole PBG into the hydroxymethylbilane pre-uroporphyrinogen in several discrete steps. The protein is Porphobilinogen deaminase of Bordetella petrii (strain ATCC BAA-461 / DSM 12804 / CCUG 43448).